Consider the following 230-residue polypeptide: Complex I assembly factor TMEM126B, mitochondrial (230 aa).

The residue at position 34 (serine 34) is a Phosphoserine. 4 consecutive transmembrane segments (helical) span residues 72 to 92 (IYQM…SNFL), 110 to 130 (LATL…IDAL), 141 to 161 (VFRS…SLAF), and 199 to 219 (IPLV…YAVF).

The protein belongs to the TMEM126 family. As to quaternary structure, part of the mitochondrial complex I assembly/MCIA complex that comprises at least the core subunits TMEM126B, NDUFAF1, ECSIT and ACAD9 and complement subunits such as COA1 and TMEM186. Associates with the intermediate 370 kDa subcomplex of incompletely assembled complex I. Interacts with TMEM70.

Its subcellular location is the mitochondrion membrane. In terms of biological role, as part of the MCIA complex, involved in the assembly of the mitochondrial complex I. Participates in constructing the membrane arm of complex I. The polypeptide is Complex I assembly factor TMEM126B, mitochondrial (Homo sapiens (Human)).